Here is a 207-residue protein sequence, read N- to C-terminus: Ras-related protein Rab-8B (207 aa).

GTP-binding residues include S17, G18, V19, G20, K21, T22, C23, T35, S39, and T40. Position 22 (T22) interacts with Mg(2+). 2 consecutive short sequence motifs (switch) follow at residues 31-45 and 63-80; these read DAFN…GIDF and DTAG…YYRG. Mg(2+) is bound by residues T40 and D63. G66 lines the GTP pocket. T72 is subject to Phosphothreonine; by LRRK2. Residues N121, K122, D124, A152, and K153 each contribute to the GTP site. A phosphoserine mark is found at S180 and S183. C204 carries the cysteine methyl ester modification. A lipid anchor (S-geranylgeranyl cysteine) is attached at C204. The propeptide at 205 to 207 is removed in mature form; the sequence is SLL.

This sequence belongs to the small GTPase superfamily. Rab family. As to quaternary structure, associated with actin, delta-catenin and alpha and beta tubulins. Interacts with OTOF. Interacts with PEX5R. Interacts with RAB3IP. Interacts with VIM. Interacts with CDH1. Interacts with MICALL2. Interacts with GDI1, GDI2, CHML and CHM; phosphorylation at Thr-72 disrupts these interactions. Interacts with MICAL1. Mg(2+) is required as a cofactor. Post-translationally, phosphorylation of Thr-72 in the switch II region by LRRK2 prevents the association of RAB regulatory proteins, including CHM, CHML and RAB GDP dissociation inhibitors GDI1 and GDI2.

The protein resides in the cell membrane. The protein localises to the cytoplasmic vesicle. It localises to the phagosome membrane. It is found in the endosome membrane. The catalysed reaction is GTP + H2O = GDP + phosphate + H(+). Its activity is regulated as follows. Regulated by guanine nucleotide exchange factors (GEFs) including RAB3IP/RABIN8 which promotes the exchange of bound GDP for free GTP. Regulated by GTPase activating proteins (GAPs) which increase the GTP hydrolysis activity. Inhibited by GDP dissociation inhibitors (GDIs). In terms of biological role, the small GTPases Rab are key regulators of intracellular membrane trafficking, from the formation of transport vesicles to their fusion with membranes. Rabs cycle between an inactive GDP-bound form and an active GTP-bound form that is able to recruit to membranes different sets of downstream effectors directly responsible for vesicle formation, movement, tethering and fusion. RAB8B may be involved in polarized vesicular trafficking and neurotransmitter release. May participate in cell junction dynamics in Sertoli cells. May also participate in the export of a subset of neosynthesized proteins through a Rab8-Rab10-Rab11-dependent endososomal export route. In Mus musculus (Mouse), this protein is Ras-related protein Rab-8B.